Reading from the N-terminus, the 158-residue chain is S-ribosylhomocysteine lyase (158 aa).

Residues histidine 54, histidine 58, and cysteine 124 each coordinate Fe cation.

Belongs to the LuxS family. In terms of assembly, homodimer. Fe cation is required as a cofactor.

The catalysed reaction is S-(5-deoxy-D-ribos-5-yl)-L-homocysteine = (S)-4,5-dihydroxypentane-2,3-dione + L-homocysteine. Its function is as follows. Involved in the synthesis of autoinducer 2 (AI-2) which is secreted by bacteria and is used to communicate both the cell density and the metabolic potential of the environment. The regulation of gene expression in response to changes in cell density is called quorum sensing. Catalyzes the transformation of S-ribosylhomocysteine (RHC) to homocysteine (HC) and 4,5-dihydroxy-2,3-pentadione (DPD). This chain is S-ribosylhomocysteine lyase, found in Limosilactobacillus reuteri (Lactobacillus reuteri).